The primary structure comprises 207 residues: Small ribosomal subunit protein uS10m (207 aa).

The transit peptide at 1 to 24 (MLSVFGLRTVARCNSTLASGGARA) directs the protein to the mitochondrion.

The protein belongs to the universal ribosomal protein uS10 family. In terms of assembly, part of the mitochondrial small ribosomal subunit.

The protein localises to the mitochondrion. Involved in mitochondrial genome encoded proteins translation. Involved in the binding of tRNA to the ribosomes. This is Small ribosomal subunit protein uS10m (RSM10) from Eremothecium gossypii (strain ATCC 10895 / CBS 109.51 / FGSC 9923 / NRRL Y-1056) (Yeast).